The sequence spans 142 residues: DNA-directed RNA polymerase II subunit RPB4 (142 aa).

It belongs to the eukaryotic RPB4 RNA polymerase subunit family. As to quaternary structure, component of the RNA polymerase II (Pol II) core complex consisting of 12 subunits: a ten-subunit catalytic core composed of POLR2A/RPB1, POLR2B/RPB2, POLR2C/RPB3, POLR2I/RPB9, POLR2J/RPB11, POLR2E/RPABC1, POLR2F/RPABC2, POLR2H/RPABC3, POLR2K/RPABC4 and POLR2L/RPABC5 and a mobile stalk composed of two subunits POLR2D/RPB4 and POLR2G/RPB7, protruding from the core and functioning primarily in transcription initiation. Part of Pol II(G) complex, in which Pol II core associates with an additional subunit POLR2M; unlike conventional Pol II, Pol II(G) functions as a transcriptional repressor. Part of TBP-based Pol II pre-initiation complex (PIC), in which Pol II core assembles with general transcription factors and other specific initiation factors including GTF2E1, GTF2E2, GTF2F1, GTF2F2, TCEA1, ERCC2, ERCC3, GTF2H2, GTF2H3, GTF2H4, GTF2H5, GTF2A1, GTF2A2, GTF2B and TBP; this large multi-subunit PIC complex mediates DNA unwinding and targets Pol II core to the transcription start site where the first phosphodiester bond forms.

The protein resides in the nucleus. Its function is as follows. Core component of RNA polymerase II (Pol II), a DNA-dependent RNA polymerase which synthesizes mRNA precursors and many functional non-coding RNAs using the four ribonucleoside triphosphates as substrates. Pol II is the central component of the basal RNA polymerase II transcription machinery. It is composed of mobile elements that move relative to each other. POLR2D/RPB4 is part of a subcomplex with POLR2G/RPB7 that binds to a pocket formed by POLR2A/RPB1, POLR2B/RPB2 and POLR2F/RPABC2 at the base of the clamp element. The POLR2D/RPB4-POLR2G/RPB7 subcomplex seems to lock the clamp via POLR2G/RPB7 in the closed conformation thus preventing double-stranded DNA to enter the active site cleft. The POLR2D/RPB4-POLR2G/RPB7 subcomplex binds single-stranded DNA and RNA. This is DNA-directed RNA polymerase II subunit RPB4 (POLR2D) from Homo sapiens (Human).